Consider the following 107-residue polypeptide: Iron-binding protein IscA (107 aa).

Residues C35, C99, and C101 each contribute to the Fe cation site.

It belongs to the HesB/IscA family. Homodimer; may form tetramers and higher multimers. Fe cation serves as cofactor.

Functionally, is able to transfer iron-sulfur clusters to apo-ferredoxin. Multiple cycles of [2Fe2S] cluster formation and transfer are observed, suggesting that IscA acts catalytically. Recruits intracellular free iron so as to provide iron for the assembly of transient iron-sulfur cluster in IscU in the presence of IscS, L-cysteine and the thioredoxin reductase system TrxA/TrxB. This chain is Iron-binding protein IscA, found in Salmonella agona (strain SL483).